Here is a 288-residue protein sequence, read N- to C-terminus: MKNVLSIQSHVVYGFAGNKSATFPMQLLGVDVWALNTVQFSNHTQYGKWTGMVIPQEQIREIVTGLDNIEKLQECDALLSGYLGSAEQVDQILFALEQIKLRNPNALYLCDPVMPHPKKICVVANGVREALIEKAIPVADIMTPNLHELRQLTEFPINTFDDVLKAVNALIAKGVKKVLVKHLGSAGKINDPDTFEIIMATPEGVWHLSRPLYQFNFEPVGVGDLIAGTFLANLLNGKSDVEAFEAMNNEVAGVMKTTFELGSYELQTIAARFEILNPSSNYKAEKVA.

Residues Ser-9 and 44–45 (TQ) each bind substrate. Asp-111, Glu-148, and Lys-181 together coordinate ATP. Residue Asp-224 coordinates substrate.

It belongs to the pyridoxine kinase family. PdxY subfamily. As to quaternary structure, homodimer. Requires Mg(2+) as cofactor.

The catalysed reaction is pyridoxal + ATP = pyridoxal 5'-phosphate + ADP + H(+). Its pathway is cofactor metabolism; pyridoxal 5'-phosphate salvage; pyridoxal 5'-phosphate from pyridoxal: step 1/1. Its function is as follows. Pyridoxal kinase involved in the salvage pathway of pyridoxal 5'-phosphate (PLP). Catalyzes the phosphorylation of pyridoxal to PLP. The polypeptide is Pyridoxal kinase PdxY (Haemophilus influenzae (strain ATCC 51907 / DSM 11121 / KW20 / Rd)).